The following is a 522-amino-acid chain: Semenogelin-2 (522 aa).

The signal sequence occupies residues 1–23 (MKSIILFVLSLLLILEKQAAVMG). Disordered regions lie at residues 26 to 62 (CGSK…SKGS), 132 to 158 (GGQA…ISSQ), 272 to 358 (NLNQ…ERHL), and 379 to 522 (EEQI…PVST). Composition is skewed to polar residues over residues 31–40 (QLPSGSSQFP) and 137–158 (RGTQ…ISSQ). Residues 292 to 310 (RTEERQLNRGEKSVQKDVS) are compositionally biased toward basic and acidic residues. Residues 325-335 (KSQNQVTIHSQ) are compositionally biased toward polar residues. The span at 336 to 345 (GQEHGHKENK) shows a compositional bias: basic and acidic residues. Composition is skewed to polar residues over residues 379-397 (EEQI…SQAQ), 427-436 (KDVSQSSTSF), and 446-464 (SQIQ…QNAK). Composition is skewed to basic and acidic residues over residues 465–492 (GKSD…ESSE) and 499–522 (TEHE…PVST).

This sequence belongs to the semenogelin family. As to quaternary structure, interacts with SERPINA5.

The protein resides in the secreted. In terms of biological role, participates in the formation of a gel matrix (sperm coagulum) entrapping the accessory gland secretions and ejaculated spermatozoa. This is Semenogelin-2 (SEMG2) from Hylobates klossii (Kloss's gibbon).